Here is a 235-residue protein sequence, read N- to C-terminus: Sugar fermentation stimulation protein homolog (235 aa).

The protein belongs to the SfsA family.

This chain is Sugar fermentation stimulation protein homolog, found in Serratia proteamaculans (strain 568).